Reading from the N-terminus, the 249-residue chain is General transcription factor IIF subunit 2 (249 aa).

At A2 the chain carries N-acetylalanine. Residues K22, K33, and K137 each carry the N6-acetyllysine modification. A Phosphoserine modification is found at S142. Residues G227 and H229 each coordinate DNA. At S248 the chain carries Phosphoserine.

It belongs to the TFIIF beta subunit family. In terms of assembly, heterodimer of an alpha and a beta subunit. Interacts with HTATSF1 and GPBP1. Interacts with URI1. Interacts with GTF2B (via N-terminus); this interaction is inhibited in presence of GTF2F1. Part of TBP-based Pol II pre-initiation complex (PIC), in which Pol II core assembles with general transcription factors and other specific initiation factors including GTF2E1, GTF2E2, GTF2F1, GTF2F2, TCEA1, ERCC2, ERCC3, GTF2H2, GTF2H3, GTF2H4, GTF2H5, GTF2A1, GTF2A2, GTF2B and TBP; this large multi-subunit PIC complex mediates DNA unwinding and targets Pol II core to the transcription start site where the first phosphodiester bond forms.

It is found in the nucleus. In terms of biological role, TFIIF is a general transcription initiation factor that binds to RNA polymerase II and helps to recruit it to the initiation complex in collaboration with TFIIB. It promotes transcription elongation. The chain is General transcription factor IIF subunit 2 (Gtf2f2) from Rattus norvegicus (Rat).